The following is a 436-amino-acid chain: Protein disulfide-isomerase (436 aa).

Residues 216 to 365 (FLAGKIDPSI…VEDATESAKA (150 aa)) enclose the Thioredoxin domain. Active-site nucleophile residues include C266 and C269. An intrachain disulfide couples C266 to C269. The segment at 328 to 436 (TLVPHCRGSR…ASASSVKDEL (109 aa)) is disordered. The segment covering 334–343 (RGSRPVHRRE) has biased composition (basic residues). 2 stretches are compositionally biased toward low complexity: residues 362–377 (SAKA…AASA) and 385–436 (VKSG…KDEL). Positions 433–436 (KDEL) match the Prevents secretion from ER motif.

The protein belongs to the protein disulfide isomerase family.

It is found in the endoplasmic reticulum lumen. It carries out the reaction Catalyzes the rearrangement of -S-S- bonds in proteins.. In terms of biological role, participates in the folding of proteins containing disulfide bonds, may be involved in glycosylation, prolyl hydroxylation and triglyceride transfer. This is Protein disulfide-isomerase from Alternaria alternata (Alternaria rot fungus).